The following is a 159-amino-acid chain: Phosphopantetheine adenylyltransferase (159 aa).

Histidine 16 is a binding site for ATP. Residues lysine 40, methionine 72, and arginine 86 each contribute to the substrate site. ATP-binding positions include 87 to 89 (GLR), glutamate 97, and 122 to 128 (YQYLSAS).

It belongs to the bacterial CoaD family. Homohexamer. Requires Mg(2+) as cofactor.

Its subcellular location is the cytoplasm. It catalyses the reaction (R)-4'-phosphopantetheine + ATP + H(+) = 3'-dephospho-CoA + diphosphate. The protein operates within cofactor biosynthesis; coenzyme A biosynthesis; CoA from (R)-pantothenate: step 4/5. Functionally, reversibly transfers an adenylyl group from ATP to 4'-phosphopantetheine, yielding dephospho-CoA (dPCoA) and pyrophosphate. This chain is Phosphopantetheine adenylyltransferase, found in Dehalococcoides mccartyi (strain ATCC BAA-2100 / JCM 16839 / KCTC 5957 / BAV1).